The chain runs to 458 residues: ATP synthase subunit beta (458 aa).

Residue 148-155 (GGAGVGKT) participates in ATP binding.

The protein belongs to the ATPase alpha/beta chains family. As to quaternary structure, F-type ATPases have 2 components, CF(1) - the catalytic core - and CF(0) - the membrane proton channel. CF(1) has five subunits: alpha(3), beta(3), gamma(1), delta(1), epsilon(1). CF(0) has three main subunits: a(1), b(2) and c(9-12). The alpha and beta chains form an alternating ring which encloses part of the gamma chain. CF(1) is attached to CF(0) by a central stalk formed by the gamma and epsilon chains, while a peripheral stalk is formed by the delta and b chains.

Its subcellular location is the cell inner membrane. It catalyses the reaction ATP + H2O + 4 H(+)(in) = ADP + phosphate + 5 H(+)(out). In terms of biological role, produces ATP from ADP in the presence of a proton gradient across the membrane. The catalytic sites are hosted primarily by the beta subunits. This chain is ATP synthase subunit beta, found in Francisella tularensis subsp. holarctica (strain FTNF002-00 / FTA).